A 363-amino-acid chain; its full sequence is Cyanuric acid amidohydrolase (363 aa).

An RU A region spans residues 1 to 103 (MKTRVTRLTV…LVFEVDDSAP (103 aa)). Residues Arg-51 and 82 to 83 (SG) each bind substrate. The segment at 111 to 247 (GLAAGVAFTR…NEVLVLGNAP (137 aa)) is RU B. Lys-161 is an active-site residue. Residues Arg-193 and 230–231 (SA) each bind substrate. Ser-230 (nucleophile) is an active-site residue. Positions 253–363 (YRIGHAVMED…GGPLALIVRS (111 aa)) are RU C. Glu-297 provides a ligand contact to Mg(2+). Substrate is bound by residues Arg-324 and 343-344 (SG). Ala-346, Gln-349, Gly-350, Pro-351, and Gly-354 together coordinate Mg(2+).

This sequence belongs to the cyclic amide hydrolase (CyAH) family. Homotetramer.

The catalysed reaction is cyanurate + H2O = 1-carboxybiuret + H(+). The protein operates within xenobiotic degradation; atrazine degradation; biuret from cyanurate: step 1/1. With respect to regulation, inhibited by barbituric acid. Its function is as follows. Responsible for the hydrolysis of cyanuric acid, an intermediate formed during catabolism of s-triazine based compounds in herbicides such as atrazine and polymers such as melamine. Catalyzes the hydrolytic opening of the s-triazine ring of cyanuric acid (2,4,6-trihydroxy-s-triazine) to yield carbon dioxide and carboxybiuret, which spontaneously decarboxylates to biuret. In Ectopseudomonas oleovorans (strain CECT 5344) (Pseudomonas pseudoalcaligenes), this protein is Cyanuric acid amidohydrolase.